A 38-amino-acid chain; its full sequence is Cytochrome b6-f complex subunit 5 (38 aa).

The chain crosses the membrane as a helical span at residues 5–25; that stretch reads LVLGLVMGLVPITLAGLFVAA.

Belongs to the PetG family. As to quaternary structure, the 4 large subunits of the cytochrome b6-f complex are cytochrome b6, subunit IV (17 kDa polypeptide, PetD), cytochrome f and the Rieske protein, while the 4 small subunits are PetG, PetL, PetM and PetN. The complex functions as a dimer.

The protein localises to the cellular thylakoid membrane. In terms of biological role, component of the cytochrome b6-f complex, which mediates electron transfer between photosystem II (PSII) and photosystem I (PSI), cyclic electron flow around PSI, and state transitions. PetG is required for either the stability or assembly of the cytochrome b6-f complex. This chain is Cytochrome b6-f complex subunit 5, found in Gloeothece citriformis (strain PCC 7424) (Cyanothece sp. (strain PCC 7424)).